Reading from the N-terminus, the 259-residue chain is Ribosomal RNA small subunit methyltransferase J (259 aa).

Residues 101–102 (RD), 117–118 (ER), 153–154 (SS), and Asp-176 contribute to the S-adenosyl-L-methionine site.

Belongs to the methyltransferase superfamily. RsmJ family.

It localises to the cytoplasm. The enzyme catalyses guanosine(1516) in 16S rRNA + S-adenosyl-L-methionine = N(2)-methylguanosine(1516) in 16S rRNA + S-adenosyl-L-homocysteine + H(+). Its function is as follows. Specifically methylates the guanosine in position 1516 of 16S rRNA. The sequence is that of Ribosomal RNA small subunit methyltransferase J from Aliivibrio fischeri (strain ATCC 700601 / ES114) (Vibrio fischeri).